The primary structure comprises 291 residues: MTSSYLHFPDFDPVIFSIGPVALHWYGLMYLVGFVFAMWLAVRRANRPGSGWTKNEVENLLYAGFLGVFLGGRIGYVLFYNFPLFLDNPLYLFRVWDGGMSFHGGLIGVILVMIIFARRTKRSFFQVSDFIAPLIPFGLGAGRLGNFINGELWGRVDPDFRFAMLFPGSRAEDIALLPSHPQWQPIFDTYGVLPRHPSQLYELALEGVVLFIILNLFIRKPRPMGAVSGLFLIGYGAFRIIVEFFRQPDAQFTGAWVQYISMGQILSIPMIIAGAIMMVWAYRRRPQQHVS.

The next 7 membrane-spanning stretches (helical) occupy residues Val-21 to Ala-41, Leu-60 to Tyr-80, Trp-96 to Phe-116, Phe-130 to Gly-150, Ser-198 to Ile-218, Gly-225 to Phe-245, and Ile-260 to Trp-280. Arg-143 provides a ligand contact to a 1,2-diacyl-sn-glycero-3-phospho-(1'-sn-glycerol).

It belongs to the Lgt family.

The protein resides in the cell inner membrane. The enzyme catalyses L-cysteinyl-[prolipoprotein] + a 1,2-diacyl-sn-glycero-3-phospho-(1'-sn-glycerol) = an S-1,2-diacyl-sn-glyceryl-L-cysteinyl-[prolipoprotein] + sn-glycerol 1-phosphate + H(+). It participates in protein modification; lipoprotein biosynthesis (diacylglyceryl transfer). Functionally, catalyzes the transfer of the diacylglyceryl group from phosphatidylglycerol to the sulfhydryl group of the N-terminal cysteine of a prolipoprotein, the first step in the formation of mature lipoproteins. The chain is Phosphatidylglycerol--prolipoprotein diacylglyceryl transferase from Salmonella agona (strain SL483).